Reading from the N-terminus, the 391-residue chain is Probable sugar efflux transporter (391 aa).

The next 12 membrane-spanning stretches (helical) occupy residues 16-36 (VFVF…PVAL), 51-71 (VGLM…PLML), 82-102 (LLFL…AWNF), 110-130 (MGIA…VIRV), 138-158 (QALG…LPLG), 170-190 (TFGV…KLLP), 210-230 (PLLM…FTTY), 247-267 (ITTL…FLFS), 277-297 (FIAF…VFKN), 300-320 (WVIF…TIAL), 338-358 (IFSG…SIVI), and 361-381 (LGLE…LFWL).

The protein belongs to the major facilitator superfamily. SotB (TC 2.A.1.2) family.

It localises to the cell inner membrane. Functionally, involved in the efflux of sugars. The physiological role may be the reduction of the intracellular concentration of toxic sugars or sugar metabolites. This chain is Probable sugar efflux transporter, found in Helicobacter pylori (strain HPAG1).